Here is a 1123-residue protein sequence, read N- to C-terminus: Alpha-mannosidase E (1123 aa).

The N-terminal stretch at 1-21 (MNKTKLIKIIFVIGVWILLST) is a signal peptide. N-linked (GlcNAc...) asparagine glycans are attached at residues asparagine 2 and asparagine 38. Residues 22–1072 (FIINIYNENF…KYNRPNHLAL (1051 aa)) lie on the Extracellular side of the membrane. The Zn(2+) site is built by histidine 67 and aspartate 69. The N-linked (GlcNAc...) asparagine glycan is linked to asparagine 140. Zn(2+)-binding residues include aspartate 150 and histidine 409. The Nucleophile role is filled by aspartate 150. N-linked (GlcNAc...) asparagine glycosylation is found at asparagine 521, asparagine 675, asparagine 858, asparagine 887, asparagine 975, and asparagine 990. A helical transmembrane segment spans residues 1073–1093 (ILSLSIGTPAGILIIVIALVV). The Cytoplasmic segment spans residues 1094–1123 (IYKKRKNRKTLTSSYSLLNLILKDRADSSP).

Belongs to the glycosyl hydrolase 38 family. Zn(2+) serves as cofactor.

Its subcellular location is the membrane. It catalyses the reaction Hydrolysis of terminal, non-reducing alpha-D-mannose residues in alpha-D-mannosides.. In Dictyostelium discoideum (Social amoeba), this protein is Alpha-mannosidase E (manE).